A 439-amino-acid polypeptide reads, in one-letter code: ATP-dependent RNA helicase SUB2 (439 aa).

Positions 1–19 are enriched in acidic residues; sequence MSHEGEEDLLEYSDNEQEI. The tract at residues 1 to 48 is disordered; that stretch reads MSHEGEEDLLEYSDNEQEIQVDNKETAVEGTTENEATQENGEADKKGS. Residues 29-40 are compositionally biased toward polar residues; it reads EGTTENEATQEN. Positions 55-83 match the Q motif motif; that stretch reads TGFKDFLLKPELSRAIIDCGFEHPSEVQQ. The Helicase ATP-binding domain occupies 86–261; sequence IPQSIHGTDV…RRFLQNPLEI (176 aa). 99-106 contacts ATP; the sequence is AKSGLGKT. The DECD box motif lies at 208-211; the sequence is DECD. In terms of domain architecture, Helicase C-terminal spans 273–434; the sequence is GLQQYYIKLE…EFPEEGIDPS (162 aa).

It belongs to the DEAD box helicase family. DECD subfamily.

Its subcellular location is the nucleus. The catalysed reaction is ATP + H2O = ADP + phosphate + H(+). Functionally, ATP-binding RNA helicase involved in transcription elongation and required for the export of mRNA out of the nucleus. SUB2 also plays a role in pre-mRNA splicing and spliceosome assembly. May be involved in rDNA and telomeric silencing, and maintenance of genome integrity. This is ATP-dependent RNA helicase SUB2 (SUB2) from Candida glabrata (strain ATCC 2001 / BCRC 20586 / JCM 3761 / NBRC 0622 / NRRL Y-65 / CBS 138) (Yeast).